The sequence spans 445 residues: Meiosis-specific serine/threonine-protein kinase mek1 (445 aa).

The region spanning 62 to 116 (VSVGRSNTCNYQLLQFTASYKHFRVYSVLIDDDMDPLVYCEDQSSNGTFLNHRLI) is the FHA domain. The Protein kinase domain occupies 160 to 421 (NITQRLLGIG…VKQCLSHPWF (262 aa)). ATP-binding positions include 166-174 (LGIGGFSRI) and Lys189. Asp281 acts as the Proton acceptor in catalysis.

This sequence belongs to the protein kinase superfamily. CAMK Ser/Thr protein kinase family. CHEK2 subfamily.

The catalysed reaction is L-seryl-[protein] + ATP = O-phospho-L-seryl-[protein] + ADP + H(+). It carries out the reaction L-threonyl-[protein] + ATP = O-phospho-L-threonyl-[protein] + ADP + H(+). Functionally, probable protein kinase required for meiotic recombination. The chain is Meiosis-specific serine/threonine-protein kinase mek1 (mek1) from Schizosaccharomyces pombe (strain 972 / ATCC 24843) (Fission yeast).